The sequence spans 174 residues: Protein MOTHER of FT and TFL1 homolog 2 (174 aa).

Belongs to the phosphatidylethanolamine-binding protein family.

Its function is as follows. May form complexes with phosphorylated ligands by interfering with kinases and their effectors. The chain is Protein MOTHER of FT and TFL1 homolog 2 from Oryza sativa subsp. japonica (Rice).